The chain runs to 546 residues: MTKYVFVTGGVVSSLGKGIAAASLGAILESRGIKVTHLKLDPYINVDPGTMSPFQHGEVFVTDDGAETDLDLGHYERFTSAKMAKRNNFTTGQIYDSVLKKERRGEYLGKTVQVIPHITDEIKDRIKAGAEGADVAIVEVGGTVGDIESLPFLEAIRQMGIMEGRNNVCFMHLTLLPYIPTAGELKTKPTQHSVKELREIGIQPDILLCRADRSIPVEERRKIALFCNVMPEAVIECLDADSIYKIPGMLHEQMLDEIVCHKLNILAKAADLTVWENLIVALEHPLHQVKIAFVGKYVDLTESYKSLIEAIKHAGIHTRSQVNIIYLDSEDIEKNGTGVLEDLDAILVPGGFGRRGTEGKIAAIRYARENKVPYLGICLGMQLAVVEFARDVAGMPGAHSTEFVQDTPYPVIGLITEWLDASGKIEKRTEDSDIGGTMRLGAQVCKLGEGTLARSIYGAPEITERHRHRYEVNNTLLAKLEEKGLIVAGRAPGTDLCEMVELPADVHPWFVGCQFHPEFTSNPRQGHPLFSSYVKAALANQKAKGK.

The tract at residues 1-265 (MTKYVFVTGG…DEIVCHKLNI (265 aa)) is amidoligase domain. Position 13 (Ser13) interacts with CTP. Ser13 is a UTP binding site. ATP-binding positions include 14–19 (SLGKGI) and Asp71. Residues Asp71 and Glu139 each contribute to the Mg(2+) site. Residues 146 to 148 (DIE), 186 to 191 (KTKPTQ), and Lys222 each bind CTP. UTP contacts are provided by residues 186-191 (KTKPTQ) and Lys222. Residues 290 to 543 (KIAFVGKYVD…VKAALANQKA (254 aa)) enclose the Glutamine amidotransferase type-1 domain. Residue Gly351 participates in L-glutamine binding. The active-site Nucleophile; for glutamine hydrolysis is the Cys378. Residues 379-382 (LGMQ), Glu402, and Arg469 each bind L-glutamine. Catalysis depends on residues His516 and Glu518.

This sequence belongs to the CTP synthase family. In terms of assembly, homotetramer.

It catalyses the reaction UTP + L-glutamine + ATP + H2O = CTP + L-glutamate + ADP + phosphate + 2 H(+). It carries out the reaction L-glutamine + H2O = L-glutamate + NH4(+). The catalysed reaction is UTP + NH4(+) + ATP = CTP + ADP + phosphate + 2 H(+). It participates in pyrimidine metabolism; CTP biosynthesis via de novo pathway; CTP from UDP: step 2/2. Allosterically activated by GTP, when glutamine is the substrate; GTP has no effect on the reaction when ammonia is the substrate. The allosteric effector GTP functions by stabilizing the protein conformation that binds the tetrahedral intermediate(s) formed during glutamine hydrolysis. Inhibited by the product CTP, via allosteric rather than competitive inhibition. Functionally, catalyzes the ATP-dependent amination of UTP to CTP with either L-glutamine or ammonia as the source of nitrogen. Regulates intracellular CTP levels through interactions with the four ribonucleotide triphosphates. In Dechloromonas aromatica (strain RCB), this protein is CTP synthase.